A 408-amino-acid polypeptide reads, in one-letter code: Cytochrome bc1 complex Rieske iron-sulfur subunit (408 aa).

3 helical membrane passes run 56–76, 98–118, and 162–182; these read VTFWLVLGIIGGLGFLATYIF, MLGITSGLCILSLGFAVVLYV, and LIMGLAGGGAVLAGLTIIAPM. One can recognise a Rieske domain in the interval 293 to 390; that stretch reads HGPRNAVMLI…ITVDEEGYLI (98 aa). Positions 333, 335, 352, and 355 each coordinate [2Fe-2S] cluster. Cysteines 338 and 354 form a disulfide.

It belongs to the Rieske iron-sulfur protein family. In terms of assembly, the cytochrome bc1 complex is composed of a cytochrome b (QcrB), the Rieske iron-sulfur protein (QcrA) and a diheme cytochrome c (QcrC) subunit. The bc1 complex forms a supercomplex with cytochrome c oxidase (cytochrome aa3). It depends on [2Fe-2S] cluster as a cofactor.

The protein resides in the cell membrane. In terms of biological role, iron-sulfur subunit of the cytochrome bc1 complex, an essential component of the respiratory electron transport chain required for ATP synthesis. The bc1 complex catalyzes the oxidation of menaquinol and the reduction of cytochrome c in the respiratory chain. The bc1 complex operates through a Q-cycle mechanism that couples electron transfer to generation of the proton gradient that drives ATP synthesis. In Corynebacterium glutamicum (strain ATCC 13032 / DSM 20300 / JCM 1318 / BCRC 11384 / CCUG 27702 / LMG 3730 / NBRC 12168 / NCIMB 10025 / NRRL B-2784 / 534), this protein is Cytochrome bc1 complex Rieske iron-sulfur subunit (qcrA).